A 499-amino-acid chain; its full sequence is Serine/threonine-protein phosphatase 5 (499 aa).

Residues 1-23 (MAMAEGERTECAEPPRDEPPADG) form a disordered region. Ala2 is subject to N-acetylalanine. 3 TPR repeats span residues 28-61 (AEELKTQANDYFKAKDYENAIKFYSQAIELNPSN), 62-95 (AIYYGNRSLAYLRTECYGYALGDATRAIELDKKY), and 96-129 (IKGYYRRAASNMALGKFRAALRDYETVVKVKPHD). Residues 184–499 (GKVTISFMKE…ANTLLQLGMM (316 aa)) are catalytic. Residues Asp242, His244, and Asp271 each coordinate Mn(2+). Residue His244 coordinates substrate. Substrate-binding positions include Arg275 and 303–304 (NH). Asn303 serves as a coordination point for Mn(2+). Catalysis depends on His304, which acts as the Proton donor/acceptor. A Mn(2+)-binding site is contributed by His352. Arg400 and His427 together coordinate substrate. His427 is a Mn(2+) binding site. The interval 495–499 (QLGMM) is required for autoinhibition.

The protein belongs to the PPP phosphatase family. PP-5 (PP-T) subfamily. As to quaternary structure, probably forms a complex composed of chaperones HSP90 and HSP70, co-chaperones STIP1/HOP, CDC37, PPP5C, PTGES3/p23, TSC1 and client protein TSC2. Probably forms a complex composed of chaperones HSP90 and HSP70, co-chaperones CDC37, PPP5C, TSC1 and client protein TSC2, CDK4, AKT, RAF1 and NR3C1; this complex does not contain co-chaperones STIP1/HOP and PTGES3/p23. Part of a complex with HSP90/HSP90AA1 and steroid receptors. Interacts (via TPR repeats) with HSP90AA1 (via TPR repeat-binding motif) or HSPA1A/HSPA1B; the interaction is direct and activates the phosphatase activity. Dissociates from HSPA1A/HSPA1B and HSP90AA1 in response to arachidonic acid. Interacts with CPNE1 (via VWFA domain). Interacts with CDC16, CDC27. Interacts with KLHDC10 (via the 6 Kelch repeats); inhibits the phosphatase activity on MAP3K5. Interacts with ATM and ATR; both interactions are induced by DNA damage and enhance ATM and ATR kinase activity. Interacts with RAD17; reduced by DNA damage. Interacts with nuclear receptors such as NR3C1/GCR and PPARG (activated by agonist); regulates their transactivation activities. Interacts (via TPR repeats) with S100 proteins S100A1, S100A2, S100A6, S100B and S100P; the interactions are calcium-dependent, strongly activate PPP5C phosphatase activity and compete with HSP90AA1 and MAP3K5 interactions. Interacts with SMAD2 and SMAD3 but not with SMAD1; decreases SMAD3 phosphorylation and protein levels. Interacts (via TPR repeats) with CRY1 and CRY2; the interaction with CRY2 down-regulates the phosphatase activity on CSNK1E. Interacts (via TPR repeats) with the active form of RAC1, GNA12 or GNA13; these interactions activate the phosphatase activity and translocate PPP5C to the cell membrane. Interacts with FLCN. Requires Mg(2+) as cofactor. Mn(2+) is required as a cofactor. Activated by at least two different proteolytic cleavages producing a 56 kDa and a 50 kDa form. As to expression, ubiquitous.

The protein localises to the nucleus. It localises to the cytoplasm. It is found in the cell membrane. The catalysed reaction is O-phospho-L-seryl-[protein] + H2O = L-seryl-[protein] + phosphate. It catalyses the reaction O-phospho-L-threonyl-[protein] + H2O = L-threonyl-[protein] + phosphate. With respect to regulation, autoinhibited. In the autoinhibited state, the TPR domain interacts with the catalytic region and prevents substrate access to the catalytic pocket. Allosterically activated by various polyunsaturated fatty acids, free long-chain fatty-acids and long-chain fatty acyl-CoA esters, arachidonic acid being the most effective activator. HSP90A and probably RAC1, GNA12 and GNA13 can also release the autoinhibition by the TPR repeat. Activation by RAC1, GNA12 and GNA13 is synergistic with the one produced by fatty acids binding. Inhibited by okadaic acid. In terms of biological role, serine/threonine-protein phosphatase that dephosphorylates a myriad of proteins involved in different signaling pathways including the kinases CSNK1E, ASK1/MAP3K5, PRKDC and RAF1, the nuclear receptors NR3C1, PPARG, ESR1 and ESR2, SMAD proteins and TAU/MAPT. Implicated in wide ranging cellular processes, including apoptosis, differentiation, DNA damage response, cell survival, regulation of ion channels or circadian rhythms, in response to steroid and thyroid hormones, calcium, fatty acids, TGF-beta as well as oxidative and genotoxic stresses. Participates in the control of DNA damage response mechanisms such as checkpoint activation and DNA damage repair through, for instance, the regulation ATM/ATR-signaling and dephosphorylation of PRKDC and TP53BP1. Inhibits ASK1/MAP3K5-mediated apoptosis induced by oxidative stress. Plays a positive role in adipogenesis, mainly through the dephosphorylation and activation of PPARG transactivation function. Also dephosphorylates and inhibits the anti-adipogenic effect of NR3C1. Regulates the circadian rhythms, through the dephosphorylation and activation of CSNK1E. May modulate TGF-beta signaling pathway by the regulation of SMAD3 phosphorylation and protein expression levels. Dephosphorylates and may play a role in the regulation of TAU/MAPT. Through their dephosphorylation, may play a role in the regulation of ions channels such as KCNH2. Dephosphorylate FNIP1, disrupting interaction with HSP90AA1/Hsp90. The protein is Serine/threonine-protein phosphatase 5 (PPP5C) of Homo sapiens (Human).